A 177-amino-acid chain; its full sequence is Large ribosomal subunit protein uL6 (177 aa).

The protein belongs to the universal ribosomal protein uL6 family. As to quaternary structure, part of the 50S ribosomal subunit.

Functionally, this protein binds to the 23S rRNA, and is important in its secondary structure. It is located near the subunit interface in the base of the L7/L12 stalk, and near the tRNA binding site of the peptidyltransferase center. The sequence is that of Large ribosomal subunit protein uL6 from Acinetobacter baumannii (strain AB307-0294).